Consider the following 529-residue polypeptide: Peptide chain release factor 3 (529 aa).

The 270-residue stretch at 11-280 (ATRRTFAIIS…GLVQWAPPPQ (270 aa)) folds into the tr-type G domain. Residues 20 to 27 (SHPDAGKT), 88 to 92 (DTPGH), and 142 to 145 (NKLD) each bind GTP.

It belongs to the TRAFAC class translation factor GTPase superfamily. Classic translation factor GTPase family. PrfC subfamily.

The protein resides in the cytoplasm. Its function is as follows. Increases the formation of ribosomal termination complexes and stimulates activities of RF-1 and RF-2. It binds guanine nucleotides and has strong preference for UGA stop codons. It may interact directly with the ribosome. The stimulation of RF-1 and RF-2 is significantly reduced by GTP and GDP, but not by GMP. The chain is Peptide chain release factor 3 from Alcanivorax borkumensis (strain ATCC 700651 / DSM 11573 / NCIMB 13689 / SK2).